The sequence spans 193 residues: DNA damage-inducible transcript 4-like protein (193 aa).

The protein belongs to the DDIT4 family.

The protein localises to the cytoplasm. Its function is as follows. Inhibits cell growth by regulating the TOR signaling pathway upstream of the TSC1-TSC2 complex and downstream of AKT1. This Pongo abelii (Sumatran orangutan) protein is DNA damage-inducible transcript 4-like protein (DDIT4L).